The primary structure comprises 171 residues: Urease accessory protein UreE (171 aa).

Residues 143-171 (SGGHQHHHGHDHDHGHHGHDHDHHHPDHE) are disordered. Basic and acidic residues predominate over residues 152-171 (HDHDHGHHGHDHDHHHPDHE).

Belongs to the UreE family.

The protein localises to the cytoplasm. Functionally, involved in urease metallocenter assembly. Binds nickel. Probably functions as a nickel donor during metallocenter assembly. The sequence is that of Urease accessory protein UreE from Brucella abortus biovar 1 (strain 9-941).